Reading from the N-terminus, the 181-residue chain is MMRNFIVVVNILALTLPFLAAEIQNPDSNCRGEKNDIVYDEQRVLYTPVRSVLNFNQYEPNYYHYRPSLPATASPYMYYPLVVRLLLLRSPAPISKWQSMPNFPQSAGVPYAIPNPSFLAMPTNENQDNTAIPTIDPITPIVSTPVPTMESIVNTVANPEASTVSINTPETTTVPVSSTAA.

Positions 1-21 (MMRNFIVVVNILALTLPFLAA) are cleaved as a signal peptide. Thr-123 bears the Phosphothreonine mark. O-linked (GalNAc...) threonine glycans are attached at residues Thr-134, Thr-144, and Thr-155. Position 162 is a phosphoserine; alternate (Ser-162). A glycan (O-linked (GalNAc...) serine; alternate) is linked at Ser-162. Position 178 is a phosphoserine (Ser-178).

Belongs to the kappa-casein family. Mammary gland specific. Secreted in milk.

It localises to the secreted. Kappa-casein stabilizes micelle formation, preventing casein precipitation in milk. The polypeptide is Kappa-casein (Csn3) (Mus musculus (Mouse)).